The primary structure comprises 906 residues: Protein translocase subunit SecA (906 aa).

Residues Gln86, 104–108 (GEGKT), and Asp511 each bind ATP. Basic and acidic residues-rich tracts occupy residues 853-865 (HESVIDNNQRHDE) and 877-888 (VRREGPKVKRND). Residues 853-906 (HESVIDNNQRHDEDEQEETPKVQQVRREGPKVKRNDPCPCGSGKKYKQCHGKVE) are disordered. Cys890, Cys892, Cys901, and His902 together coordinate Zn(2+). Positions 896 to 906 (KKYKQCHGKVE) are enriched in basic residues.

This sequence belongs to the SecA family. As to quaternary structure, monomer and homodimer. Part of the essential Sec protein translocation apparatus which comprises SecA, SecYEG and auxiliary proteins SecDF-YajC and YidC. Zn(2+) serves as cofactor.

It is found in the cell inner membrane. The protein localises to the cytoplasm. The catalysed reaction is ATP + H2O + cellular proteinSide 1 = ADP + phosphate + cellular proteinSide 2.. Part of the Sec protein translocase complex. Interacts with the SecYEG preprotein conducting channel. Has a central role in coupling the hydrolysis of ATP to the transfer of proteins into and across the cell membrane, serving both as a receptor for the preprotein-SecB complex and as an ATP-driven molecular motor driving the stepwise translocation of polypeptide chains across the membrane. This is Protein translocase subunit SecA from Francisella tularensis subsp. novicida (strain U112).